The following is a 1310-amino-acid chain: MEIQQTHRKINRPIISLALVGVLMGTELGANTPNDPIHSESRAFFTTVIIPAIVGGIATGAAVGTVSGLLSWGLKQAEQANKAPDKPDKVWRIQAGRGFDNFPHKQYDLYKSLLSSKIDGGWDWGNAARHYWVKDGQWNKLEVDMQNAVGTYNLSGLINFTGGDLDVNMQKATLRLGQFNGNSFTSFKDGANRTTRVNFDAKNILIDNFVEINNRVGSGAGRKASSTVLTLKSSEKITSRENAEISLYDGATLNLVSSSNQSVDLYGKVWMGRLQYVGAYLAPSYSTIDTSKVQGEMNFRHLAVGDQNAAQAGIIANKKTNIGTLDLWQSAGLSIITPPEGGYESKTKDNPQNNPKNDAQKTEIQPTQVIDGPFAGGKDTVVNIFHLNTKADGTLRAGGFKASLSTNAAHLHIGEGGVNLSNQASGRTLLVENLTGNITVEGTLRVNNQVGGAAIAGSSANFEFKAGEDTNNATATFNNDIHLGKAVNLRVDAHTANFNGNIYLGKSTNLRVNGHTAHFKNIDATKSDNGLNTSTLDFSGVTDKVNINKLTTAATNVNIKNFDIKELVVTTRVQSFGQYTIFGENIGDKSRIGVVSLQTGYSPAYSGGVTFKGGKKLVIDEIYHAPWNYFDARNVTDVEINKRILFGAPGNIAGKTGLMFNNLTLNSNASMDYGKDLDLTIQGHFTNNQGTMNLFVQDGRVATLNAGHQASMIFNNLVDSTTGFYKPLIKINNAQNLTKNKEHVLVKARNIDYNLVGVQGASYDNISASNTNLQEQFKERLALYNNNNRMDTCVVRKDNLNDIKACGMAIGNQSMVNNPENYKYLEGKAWKNTGINKTANNTTIAVNLGNNSTPTNSTTDTTNLPTNTTNNARFASYALIKNAPFAHSATPNLVAINQHDFGTIESVFELANRSSDIDTLYANSGAQGRDLLQTLLIDSHDAGYARTMIDATSANEITQQLNAATTTLNNIASLEHKTSGLQTLSLSNAMILNSRLVNLSRKHTNHIDSFAKRLQALKDQRFASLESAAEVLYQFAPKYEKPTNVWANAIGGTSLNNGSNASLYGTSAGVDAYLNGEVEAIVGGFGSYGYSSFSNQANSLNSGANNTNFGVYSRIFANQHEFDFEAQGALGSDQSSLNFKSALLQDLNQSYHYLAYSATTRASYGYDFAFFRNALVLKPSVGVSYNHLGSTNFKSNSNQVALSNGSSSQHLFNANANVEARYYYGDTSYFYMNAGVLQEFARFGSNNAVSLNTFKVNATRNPLNTHARVMMGGELQLAKEVFLNLGVVYLHNLISNASHFASNLGMRYSF.

The signal sequence occupies residues 1-30 (MEIQQTHRKINRPIISLALVGVLMGTELGA). Positions 339–364 (PEGGYESKTKDNPQNNPKNDAQKTEI) are disordered. Over residues 350-364 (NPQNNPKNDAQKTEI) the composition is skewed to polar residues. The Autotransporter domain occupies 1038–1310 (KYEKPTNVWA…ASNLGMRYSF (273 aa)).

Its subcellular location is the periplasm. It is found in the secreted. The protein resides in the cell surface. The protein localises to the cell outer membrane. Functionally, induces vacuolation of eukaryotic cells. Causes ulceration and gastric lesions. This Helicobacter pylori (Campylobacter pylori) protein is Vacuolating cytotoxin autotransporter (vacA).